Here is a 412-residue protein sequence, read N- to C-terminus: uncharacterized protein (412 aa).

One can recognise a Radical SAM core domain in the interval 50 to 264 (EVDIRTAYIN…KSGRRIVIGD (215 aa)). 3 residues coordinate [4Fe-4S] cluster: C64, C68, and C71.

It belongs to the radical SAM superfamily. Anaerobic sulfatase-maturating enzyme family. Requires [4Fe-4S] cluster as cofactor.

This is an uncharacterized protein from Archaeoglobus fulgidus (strain ATCC 49558 / DSM 4304 / JCM 9628 / NBRC 100126 / VC-16).